The following is a 257-amino-acid chain: Protein MoaE (257 aa).

6–29 (VITGGGTGIGAACARLMHPAGERV) is an NAD(+) binding site. Residues 75 to 96 (LMSSSAAPAGWATAPPPRPATA) are disordered. Substrate is bound at residue Ser-132. Residue Tyr-145 is the Proton acceptor of the active site.

It belongs to the short-chain dehydrogenases/reductases (SDR) family.

Its function is as follows. Might catalyze the conversion of monoamine compounds or their metabolites. The protein is Protein MoaE (moaE) of Klebsiella aerogenes (Enterobacter aerogenes).